Consider the following 198-residue polypeptide: MRKSKRERQRLLQETIRENPFITDEELAEKFSVSVQTIRLDRLELSIPELRERIKNVARQSFADKVRALPLEEVIGDIIDIEPDASAISIFDVKEEHVFRRTRIARGHHLFAQANSLAVAVIHDELALTAKATIRFVRQVKEGERVVAKAKVTGKTAHGRTIVEVNSYVGQELVFSGTFEMYRSNIEKKDGDSNEYRG.

The region spanning 102–167 is the MaoC-like domain; the sequence is TRIARGHHLF…HGRTIVEVNS (66 aa).

Belongs to the FapR family.

Its function is as follows. Transcriptional factor involved in regulation of membrane lipid biosynthesis by repressing genes involved in fatty acid and phospholipid metabolism. The protein is Transcription factor FapR of Geobacillus kaustophilus (strain HTA426).